The chain runs to 422 residues: Tyrosine--tRNA ligase (422 aa).

Position 35 (Tyr35) interacts with L-tyrosine. A 'HIGH' region motif is present at residues 40–49 (PTAPSLHLGN). The L-tyrosine site is built by Tyr170 and Gln174. The 'KMSKS' region motif lies at 231-235 (KFGKT). Residue Lys234 participates in ATP binding. Residues 353–419 (APVVDLFAEV…GKKNLAAVEV (67 aa)) form the S4 RNA-binding domain.

The protein belongs to the class-I aminoacyl-tRNA synthetase family. TyrS type 1 subfamily. Homodimer.

Its subcellular location is the cytoplasm. It carries out the reaction tRNA(Tyr) + L-tyrosine + ATP = L-tyrosyl-tRNA(Tyr) + AMP + diphosphate + H(+). Catalyzes the attachment of tyrosine to tRNA(Tyr) in a two-step reaction: tyrosine is first activated by ATP to form Tyr-AMP and then transferred to the acceptor end of tRNA(Tyr). The protein is Tyrosine--tRNA ligase of Streptomyces avermitilis (strain ATCC 31267 / DSM 46492 / JCM 5070 / NBRC 14893 / NCIMB 12804 / NRRL 8165 / MA-4680).